A 174-amino-acid chain; its full sequence is Peptide deformylase (174 aa).

Residues C91 and H133 each contribute to the Fe cation site. The active site involves E134. Residue H137 participates in Fe cation binding.

Belongs to the polypeptide deformylase family. Fe(2+) serves as cofactor.

It catalyses the reaction N-terminal N-formyl-L-methionyl-[peptide] + H2O = N-terminal L-methionyl-[peptide] + formate. Removes the formyl group from the N-terminal Met of newly synthesized proteins. Requires at least a dipeptide for an efficient rate of reaction. N-terminal L-methionine is a prerequisite for activity but the enzyme has broad specificity at other positions. The polypeptide is Peptide deformylase (Fusobacterium nucleatum subsp. nucleatum (strain ATCC 25586 / DSM 15643 / BCRC 10681 / CIP 101130 / JCM 8532 / KCTC 2640 / LMG 13131 / VPI 4355)).